The following is a 327-amino-acid chain: MNWLTNVVRPKIRNILRRETPENLWIKCPDTGQLVFYKDVEQNQFVIPGSNYHMRMGAVARLRAIFDNETWYDVALPEVVADPLKFRDERKYADRIKDARTKTGAHDAVRVGFGKLETSPVVVAVQDFDFMGGSLGMAAGEAIIRGMELAVEKHAPFIMFAASGGARMQEGILSLMQMPRTTVAVQMLREAKLPYIVVLTNPTTGGVTASYAMLGDIHIAEPGALIGFAGARVIEQTIREKLPDGFQRAEYLKEHGMVDMVVHRHDLRPTLARLCRLLTKSPALTVTTAVEAPAEAAAKAEPEATTTEQPGAPAPTEPPAQPAAPQA.

The CoA carboxyltransferase N-terminal domain maps to 24 to 293; that stretch reads LWIKCPDTGQ…LTVTTAVEAP (270 aa). Positions 293-311 are enriched in low complexity; that stretch reads PAEAAAKAEPEATTTEQPG. Positions 293–327 are disordered; sequence PAEAAAKAEPEATTTEQPGAPAPTEPPAQPAAPQA. The span at 312-327 shows a compositional bias: pro residues; sequence APAPTEPPAQPAAPQA.

The protein belongs to the AccD/PCCB family. As to quaternary structure, acetyl-CoA carboxylase is a heterohexamer composed of biotin carboxyl carrier protein (AccB), biotin carboxylase (AccC) and two subunits each of ACCase subunit alpha (AccA) and ACCase subunit beta (AccD).

It is found in the cytoplasm. It catalyses the reaction N(6)-carboxybiotinyl-L-lysyl-[protein] + acetyl-CoA = N(6)-biotinyl-L-lysyl-[protein] + malonyl-CoA. It functions in the pathway lipid metabolism; malonyl-CoA biosynthesis; malonyl-CoA from acetyl-CoA: step 1/1. Component of the acetyl coenzyme A carboxylase (ACC) complex. Biotin carboxylase (BC) catalyzes the carboxylation of biotin on its carrier protein (BCCP) and then the CO(2) group is transferred by the transcarboxylase to acetyl-CoA to form malonyl-CoA. This Rhodopseudomonas palustris (strain ATCC BAA-98 / CGA009) protein is Acetyl-coenzyme A carboxylase carboxyl transferase subunit beta.